Here is a 271-residue protein sequence, read N- to C-terminus: Interleukin-1 alpha (271 aa).

The propeptide occupies 1-112; it reads MAKVPDMFED…DSEEEIIKPR (112 aa). K82 carries the post-translational modification N6-acetyllysine. Positions 82–86 are nuclear localization signal (NLS); sequence KKRRL. Phosphoserine is present on S87. N-linked (GlcNAc...) asparagine glycosylation is found at N102, N121, N137, N141, and N211.

It belongs to the IL-1 family. In terms of assembly, monomer. Interacts with TMED10; the interaction mediates the translocation from the cytoplasm into the ERGIC (endoplasmic reticulum-Golgi intermediate compartment) and thereby secretion. Interacts with IL1R1. Interacts with S100A13; this interaction is the first step in the export of IL1A, followed by direct translocation of this complex across the plasma membrane. Post-translationally, acetylated within its nuclear localization sequence, which impacts subcellular localization. In terms of processing, proteolytic processed by CAPN1 in a calcium-dependent manner. Cleavage from 31 kDa precursor to 18 kDa biologically active molecules. Phosphorylated. Phosphorylation greatly enhances susceptibility to digestion and promotes the conversion of pre-IL1A alpha to the biologically active IL1A.

It localises to the nucleus. The protein resides in the cytoplasm. The protein localises to the secreted. Cytokine constitutively present intracellularly in nearly all resting non-hematopoietic cells that plays an important role in inflammation and bridges the innate and adaptive immune systems. After binding to its receptor IL1R1 together with its accessory protein IL1RAP, forms the high affinity interleukin-1 receptor complex. Signaling involves the recruitment of adapter molecules such as MYD88, IRAK1 or IRAK4. In turn, mediates the activation of NF-kappa-B and the three MAPK pathways p38, p42/p44 and JNK pathways. Within the cell, acts as an alarmin and cell death results in its liberation in the extracellular space after disruption of the cell membrane to induce inflammation and alert the host to injury or damage. In addition to its role as a danger signal, which occurs when the cytokine is passively released by cell necrosis, directly senses DNA damage and acts as signal for genotoxic stress without loss of cell integrity. The chain is Interleukin-1 alpha (IL1A) from Macaca mulatta (Rhesus macaque).